We begin with the raw amino-acid sequence, 86 residues long: uncharacterized protein (86 aa).

This is an uncharacterized protein from Saccharomyces cerevisiae (strain ATCC 204508 / S288c) (Baker's yeast).